The chain runs to 212 residues: Thymidylate kinase (212 aa).

Gly-7–Ser-14 is a binding site for ATP.

It belongs to the thymidylate kinase family.

It catalyses the reaction dTMP + ATP = dTDP + ADP. Its function is as follows. Phosphorylation of dTMP to form dTDP in both de novo and salvage pathways of dTTP synthesis. The protein is Thymidylate kinase of Trichlorobacter lovleyi (strain ATCC BAA-1151 / DSM 17278 / SZ) (Geobacter lovleyi).